Consider the following 326-residue polypeptide: Light-induced protein, chloroplastic (326 aa).

A chloroplast-targeting transit peptide spans 1–63 (MASISSLNQI…TNPKPKFTAQ (63 aa)).

Belongs to the LIPC family. In terms of assembly, associates with the major light-harvesting antenna complex polypeptides of the PSII oxygen-evolving complex. In terms of tissue distribution, expressed at high levels in leaves and in the petals and anthers of flowers.

Its subcellular location is the plastid. It is found in the chloroplast thylakoid membrane. Its function is as follows. Required for normal plant growth. May be both photoprotective and play an ancillary role in photosynthesis. May structurally stabilize thylakoids during osmotic and oxidative stress. The protein is Light-induced protein, chloroplastic of Solanum demissum (Wild potato).